Reading from the N-terminus, the 454-residue chain is tRNA modification GTPase MnmE (454 aa).

Positions 23, 80, and 120 each coordinate (6S)-5-formyl-5,6,7,8-tetrahydrofolate. Residues 216 to 377 (GMKVVIAGRP…LRNHLKQSMG (162 aa)) enclose the TrmE-type G domain. N226 provides a ligand contact to K(+). GTP is bound by residues 226–231 (NAGKSS), 245–251 (TDIAGTT), 270–273 (DTAG), 335–338 (NKAD), and 358–360 (SAR). A Mg(2+)-binding site is contributed by S230. Residues T245, I247, and T250 each contribute to the K(+) site. Residue T251 participates in Mg(2+) binding. K454 contacts (6S)-5-formyl-5,6,7,8-tetrahydrofolate.

It belongs to the TRAFAC class TrmE-Era-EngA-EngB-Septin-like GTPase superfamily. TrmE GTPase family. Homodimer. Heterotetramer of two MnmE and two MnmG subunits. K(+) serves as cofactor.

The protein resides in the cytoplasm. Functionally, exhibits a very high intrinsic GTPase hydrolysis rate. Involved in the addition of a carboxymethylaminomethyl (cmnm) group at the wobble position (U34) of certain tRNAs, forming tRNA-cmnm(5)s(2)U34. This is tRNA modification GTPase MnmE from Yersinia enterocolitica serotype O:8 / biotype 1B (strain NCTC 13174 / 8081).